A 559-amino-acid polypeptide reads, in one-letter code: Formate--tetrahydrofolate ligase (559 aa).

Residue 67-74 participates in ATP binding; the sequence is TPAGEGKS.

The protein belongs to the formate--tetrahydrofolate ligase family.

The enzyme catalyses (6S)-5,6,7,8-tetrahydrofolate + formate + ATP = (6R)-10-formyltetrahydrofolate + ADP + phosphate. It functions in the pathway one-carbon metabolism; tetrahydrofolate interconversion. The polypeptide is Formate--tetrahydrofolate ligase (Lactobacillus delbrueckii subsp. bulgaricus (strain ATCC BAA-365 / Lb-18)).